A 467-amino-acid polypeptide reads, in one-letter code: Fumarate hydratase class II (467 aa).

Residues 98 to 100 (SGT), Arg126, 129 to 132 (HPND), 139 to 141 (SSN), and Thr187 each bind substrate. The Proton donor/acceptor role is filled by His188. Ser318 is a catalytic residue. Substrate-binding positions include Ser319 and 324–326 (KVN).

The protein belongs to the class-II fumarase/aspartase family. Fumarase subfamily. As to quaternary structure, homotetramer.

It is found in the cytoplasm. It catalyses the reaction (S)-malate = fumarate + H2O. Its pathway is carbohydrate metabolism; tricarboxylic acid cycle; (S)-malate from fumarate: step 1/1. In terms of biological role, involved in the TCA cycle. Catalyzes the stereospecific interconversion of fumarate to L-malate. The chain is Fumarate hydratase class II from Escherichia coli O157:H7.